The sequence spans 264 residues: S-adenosylmethionine decarboxylase proenzyme (264 aa).

Serine 112 acts as the Schiff-base intermediate with substrate; via pyruvic acid in catalysis. The residue at position 112 (serine 112) is a Pyruvic acid (Ser); by autocatalysis. Histidine 117 serves as the catalytic Proton acceptor; for processing activity. The active-site Proton donor; for catalytic activity is cysteine 140.

This sequence belongs to the prokaryotic AdoMetDC family. Type 2 subfamily. In terms of assembly, heterooctamer of four alpha and four beta chains arranged as a tetramer of alpha/beta heterodimers. Requires pyruvate as cofactor. In terms of processing, is synthesized initially as an inactive proenzyme. Formation of the active enzyme involves a self-maturation process in which the active site pyruvoyl group is generated from an internal serine residue via an autocatalytic post-translational modification. Two non-identical subunits are generated from the proenzyme in this reaction, and the pyruvate is formed at the N-terminus of the alpha chain, which is derived from the carboxyl end of the proenzyme. The post-translation cleavage follows an unusual pathway, termed non-hydrolytic serinolysis, in which the side chain hydroxyl group of the serine supplies its oxygen atom to form the C-terminus of the beta chain, while the remainder of the serine residue undergoes an oxidative deamination to produce ammonia and the pyruvoyl group blocking the N-terminus of the alpha chain.

It catalyses the reaction S-adenosyl-L-methionine + H(+) = S-adenosyl 3-(methylsulfanyl)propylamine + CO2. It participates in amine and polyamine biosynthesis; S-adenosylmethioninamine biosynthesis; S-adenosylmethioninamine from S-adenosyl-L-methionine: step 1/1. Catalyzes the decarboxylation of S-adenosylmethionine to S-adenosylmethioninamine (dcAdoMet), the propylamine donor required for the synthesis of the polyamines spermine and spermidine from the diamine putrescine. In Salmonella agona (strain SL483), this protein is S-adenosylmethionine decarboxylase proenzyme.